Here is a 370-residue protein sequence, read N- to C-terminus: Aminomethyltransferase (370 aa).

The protein belongs to the GcvT family. The glycine cleavage system is composed of four proteins: P, T, L and H.

It catalyses the reaction N(6)-[(R)-S(8)-aminomethyldihydrolipoyl]-L-lysyl-[protein] + (6S)-5,6,7,8-tetrahydrofolate = N(6)-[(R)-dihydrolipoyl]-L-lysyl-[protein] + (6R)-5,10-methylene-5,6,7,8-tetrahydrofolate + NH4(+). Its function is as follows. The glycine cleavage system catalyzes the degradation of glycine. The sequence is that of Aminomethyltransferase from Clostridium botulinum (strain ATCC 19397 / Type A).